A 92-amino-acid polypeptide reads, in one-letter code: Small ribosomal subunit protein uS19 (92 aa).

It belongs to the universal ribosomal protein uS19 family.

Functionally, protein S19 forms a complex with S13 that binds strongly to the 16S ribosomal RNA. This is Small ribosomal subunit protein uS19 from Streptococcus thermophilus (strain ATCC BAA-491 / LMD-9).